The primary structure comprises 320 residues: o-succinylbenzoate synthase (320 aa).

Catalysis depends on Lys133, which acts as the Proton donor. Residues Asp161, Glu190, and Asp213 each coordinate Mg(2+). Lys235 functions as the Proton acceptor in the catalytic mechanism.

This sequence belongs to the mandelate racemase/muconate lactonizing enzyme family. MenC type 1 subfamily. A divalent metal cation is required as a cofactor.

It carries out the reaction (1R,6R)-6-hydroxy-2-succinyl-cyclohexa-2,4-diene-1-carboxylate = 2-succinylbenzoate + H2O. The protein operates within quinol/quinone metabolism; 1,4-dihydroxy-2-naphthoate biosynthesis; 1,4-dihydroxy-2-naphthoate from chorismate: step 4/7. It functions in the pathway quinol/quinone metabolism; menaquinone biosynthesis. Its function is as follows. Converts 2-succinyl-6-hydroxy-2,4-cyclohexadiene-1-carboxylate (SHCHC) to 2-succinylbenzoate (OSB). In Salmonella arizonae (strain ATCC BAA-731 / CDC346-86 / RSK2980), this protein is o-succinylbenzoate synthase.